Reading from the N-terminus, the 122-residue chain is Fluoride-specific ion channel FluC (122 aa).

Transmembrane regions (helical) follow at residues 5 to 25 (FLIG…SGII), 29 to 49 (FGIP…VGFL), 65 to 85 (FIIT…YESF), and 93 to 113 (FIKS…MIYF). Positions 72 and 75 each coordinate Na(+).

Belongs to the fluoride channel Fluc/FEX (TC 1.A.43) family.

The protein localises to the cell membrane. It carries out the reaction fluoride(in) = fluoride(out). Na(+) is not transported, but it plays an essential structural role and its presence is essential for fluoride channel function. Functionally, fluoride-specific ion channel. Important for reducing fluoride concentration in the cell, thus reducing its toxicity. This Methanococcus vannielii (strain ATCC 35089 / DSM 1224 / JCM 13029 / OCM 148 / SB) protein is Fluoride-specific ion channel FluC.